Here is a 247-residue protein sequence, read N- to C-terminus: Probable transcriptional regulatory protein MS0710 (247 aa).

This sequence belongs to the TACO1 family.

It localises to the cytoplasm. This chain is Probable transcriptional regulatory protein MS0710, found in Mannheimia succiniciproducens (strain KCTC 0769BP / MBEL55E).